The primary structure comprises 310 residues: Tagatose-6-phosphate kinase (310 aa).

It belongs to the carbohydrate kinase PfkB family. LacC subfamily.

It catalyses the reaction D-tagatofuranose 6-phosphate + ATP = D-tagatofuranose 1,6-bisphosphate + ADP + H(+). The protein operates within carbohydrate metabolism; D-tagatose 6-phosphate degradation; D-glyceraldehyde 3-phosphate and glycerone phosphate from D-tagatose 6-phosphate: step 1/2. This chain is Tagatose-6-phosphate kinase, found in Staphylococcus aureus (strain Mu3 / ATCC 700698).